Consider the following 599-residue polypeptide: Membrane protein insertase YidC (599 aa).

Residues 6-26 (NYFIAIALSVVIVLAWQFLYM) traverse the membrane as a helical segment. Residues 35-78 (RAEEARQAQQQTTQQQPAPGAAPGATVEGAPPASSTQAAATATR) form a disordered region. Over residues 41–76 (QAQQQTTQQQPAPGAAPGATVEGAPPASSTQAAATA) the composition is skewed to low complexity. 4 consecutive transmembrane segments (helical) span residues 378–398 (FGVA…PLAS), 448–468 (WPML…YVTI), 501–521 (VPHF…MFLQ), and 536–556 (IFTW…AGLV).

It belongs to the OXA1/ALB3/YidC family. Type 1 subfamily. In terms of assembly, interacts with the Sec translocase complex via SecD. Specifically interacts with transmembrane segments of nascent integral membrane proteins during membrane integration.

The protein localises to the cell inner membrane. Its function is as follows. Required for the insertion and/or proper folding and/or complex formation of integral membrane proteins into the membrane. Involved in integration of membrane proteins that insert both dependently and independently of the Sec translocase complex, as well as at least some lipoproteins. Aids folding of multispanning membrane proteins. This chain is Membrane protein insertase YidC, found in Agrobacterium fabrum (strain C58 / ATCC 33970) (Agrobacterium tumefaciens (strain C58)).